The primary structure comprises 141 residues: Hemoglobin subunit alpha-A/Q/R/T (141 aa).

The Globin domain occupies valine 1–arginine 141. Serine 3 carries the post-translational modification Phosphoserine. N6-succinyllysine is present on lysine 7. The residue at position 8 (threonine 8) is a Phosphothreonine. Lysine 11 is modified (N6-succinyllysine). Position 16 is an N6-acetyllysine; alternate (lysine 16). Lysine 16 is modified (N6-succinyllysine; alternate). Tyrosine 24 carries the phosphotyrosine modification. Serine 35 carries the phosphoserine modification. Lysine 40 bears the N6-succinyllysine mark. At serine 49 the chain carries Phosphoserine. Histidine 58 serves as a coordination point for O2. Residue histidine 87 participates in heme b binding. Phosphoserine is present on serine 102. A Phosphothreonine modification is found at threonine 108. Residues serine 124 and serine 131 each carry the phosphoserine modification. Phosphothreonine is present on residues threonine 134 and threonine 137. At serine 138 the chain carries Phosphoserine.

This sequence belongs to the globin family. In terms of assembly, heterotetramer of two alpha chains and two beta chains. As to expression, red blood cells.

Functionally, involved in oxygen transport from the lung to the various peripheral tissues. The sequence is that of Hemoglobin subunit alpha-A/Q/R/T from Macaca fascicularis (Crab-eating macaque).